A 408-amino-acid chain; its full sequence is Multidrug resistance protein MdtG (408 aa).

Helical transmembrane passes span 16 to 36 (LIVA…VMPF), 58 to 78 (IVFS…GGLA), 92 to 112 (LGMG…QFLI), 115 to 135 (ALLG…ATQV), 146 to 166 (TLST…GLLA), 173 to 193 (PVFF…LFCI), 224 to 244 (LFVT…ILTL), 256 to 276 (VAFI…LSAP), 290 to 310 (ILIT…YVQT), 319 to 339 (FLLG…LVYN), and 378 to 398 (AVFL…WNSL).

This sequence belongs to the major facilitator superfamily. DHA1 family. MdtG (TC 2.A.1.2.20) subfamily.

It is found in the cell inner membrane. In terms of biological role, confers resistance to fosfomycin and deoxycholate. This Escherichia coli O127:H6 (strain E2348/69 / EPEC) protein is Multidrug resistance protein MdtG.